The chain runs to 434 residues: Glutamate-1-semialdehyde 2,1-aminomutase 1 (434 aa).

Lys-268 bears the N6-(pyridoxal phosphate)lysine mark.

Belongs to the class-III pyridoxal-phosphate-dependent aminotransferase family. HemL subfamily. In terms of assembly, homodimer. Pyridoxal 5'-phosphate serves as cofactor.

The protein resides in the cytoplasm. The enzyme catalyses (S)-4-amino-5-oxopentanoate = 5-aminolevulinate. It participates in porphyrin-containing compound metabolism; protoporphyrin-IX biosynthesis; 5-aminolevulinate from L-glutamyl-tRNA(Glu): step 2/2. This Shouchella clausii (strain KSM-K16) (Alkalihalobacillus clausii) protein is Glutamate-1-semialdehyde 2,1-aminomutase 1.